The primary structure comprises 191 residues: Signal peptidase complex catalytic subunit sec11 (191 aa).

Residues 1-18 (MLSFLSSNLSNVRQSLAQ) are Cytoplasmic-facing. Residues 19–39 (VLNFALVLSTAFMMWKGLSVF) traverse the membrane as a helical; Signal-anchor for type II membrane protein segment. The Lumenal segment spans residues 40-191 (TASSSPVVVV…MGLMVMLQRE (152 aa)). Active-site charge relay system residues include S53, H92, and D133. The tract at residues 177 to 188 (ALLGIMGLMVML) is C-terminal short (CTS) helix.

It belongs to the peptidase S26B family. Component of the signal peptidase complex (SPC) composed of a catalytic subunit SEC11 and three accessory subunits SPC1, SPC2 and SPC3. The complex induces a local thinning of the ER membrane which is used to measure the length of the signal peptide (SP) h-region of protein substrates. This ensures the selectivity of the complex towards h-regions shorter than 18-20 amino acids. SPC associates with the translocon complex.

It is found in the endoplasmic reticulum membrane. The enzyme catalyses Cleavage of hydrophobic, N-terminal signal or leader sequences from secreted and periplasmic proteins.. Functionally, catalytic component of the signal peptidase complex (SPC) which catalyzes the cleavage of N-terminal signal sequences from nascent proteins as they are translocated into the lumen of the endoplasmic reticulum. Specifically cleaves N-terminal signal peptides that contain a hydrophobic alpha-helix (h-region) shorter than 18-20 amino acids. The polypeptide is Signal peptidase complex catalytic subunit sec11 (sec11) (Aspergillus oryzae (strain ATCC 42149 / RIB 40) (Yellow koji mold)).